Consider the following 165-residue polypeptide: Urease accessory protein UreE (165 aa).

The protein belongs to the UreE family.

The protein localises to the cytoplasm. Functionally, involved in urease metallocenter assembly. Binds nickel. Probably functions as a nickel donor during metallocenter assembly. This chain is Urease accessory protein UreE, found in Micrococcus luteus (strain ATCC 4698 / DSM 20030 / JCM 1464 / CCM 169 / CCUG 5858 / IAM 1056 / NBRC 3333 / NCIMB 9278 / NCTC 2665 / VKM Ac-2230) (Micrococcus lysodeikticus).